Here is a 226-residue protein sequence, read N- to C-terminus: Thioredoxin domain-containing protein 9 (226 aa).

Residues 75-180 (EIGSERDFFQ…TTETLEWRLG (106 aa)) enclose the Thioredoxin domain. Phosphoserine is present on residues Ser-188, Ser-221, and Ser-223.

In terms of assembly, forms ternary complexes with the chaperonin TCP1 complex, spanning the cylindrical chaperonin cavity and contacting at least 2 subunits.

The protein localises to the cytoplasm. It localises to the nucleus. The protein resides in the cytoskeleton. Its subcellular location is the microtubule organizing center. It is found in the centrosome. The protein localises to the midbody. Functionally, significantly diminishes the chaperonin TCP1 complex ATPase activity, thus negatively impacts protein folding, including that of actin or tubulin. This is Thioredoxin domain-containing protein 9 (Txndc9) from Rattus norvegicus (Rat).